The primary structure comprises 186 residues: Testis-expressed protein 29 (186 aa).

The Extracellular segment spans residues 1–56 (MKDTKEIKRSPPHLLKKFAVCDIPLYDICDYNVTRERCRSLDCCFYRGVCYEKAVP). A helical membrane pass occupies residues 57 to 77 (IYVQVFFTLIWFVAGAFIIAV). Residues 78 to 151 (IYRVIQGTKK…AGCCLWMKSK (74 aa)) lie on the Cytoplasmic side of the membrane. Disordered stretches follow at residues 104–138 (SPTPELIPEPIPEPIPEPIPEPIREPPPPVKKTES) and 151–186 (KPAKDQPQKETAAPEPPSNPEVKKVNSGSAVPQAAP). The segment covering 108-133 (ELIPEPIPEPIPEPIPEPIREPPPPV) has biased composition (pro residues).

It is found in the membrane. This is Testis-expressed protein 29 (Tex29) from Mus musculus (Mouse).